We begin with the raw amino-acid sequence, 260 residues long: Histidine-binding periplasmic protein (260 aa).

An N-terminal signal peptide occupies residues 1–22 (MKKLALSLSLVLAFSSATAAFA). A disulfide bridge connects residues cysteine 60 and cysteine 67. Residues serine 91, serine 92, serine 94, arginine 99, threonine 143, and aspartate 183 each contribute to the L-histidine site.

Belongs to the bacterial solute-binding protein 3 family. In terms of assembly, the complex is composed of two ATP-binding proteins (HisP), two transmembrane proteins (HisM and HisQ) and a solute-binding protein (HisJ).

It is found in the periplasm. Part of the ABC transporter complex HisPMQJ involved in histidine transport. Binds histidine. Interacts with HisQMP and stimulates ATPase activity of HisP, which results in histidine translocation. May have some additional function(s) in translocation that is independent of the stimulation of ATP hydrolysis. The protein is Histidine-binding periplasmic protein of Salmonella typhimurium (strain LT2 / SGSC1412 / ATCC 700720).